The following is a 350-amino-acid chain: Putative ATP-binding protein BruAb2_0487 (350 aa).

Residues 4–234 (VSLRGISKTF…PANKFVAGFI (231 aa)) form the ABC transporter domain. 36 to 43 (GPSGCGKS) contacts ATP.

This sequence belongs to the ABC transporter superfamily. The complex is composed of two ATP-binding proteins (BruAb2_0487), two transmembrane proteins (BruAb2_0483) and a solute-binding protein (BruAb2_0484).

The protein resides in the cell inner membrane. Its function is as follows. Probably part of an ABC transporter complex. Probably responsible for energy coupling to the transport system. The sequence is that of Putative ATP-binding protein BruAb2_0487 from Brucella abortus biovar 1 (strain 9-941).